A 250-amino-acid chain; its full sequence is Coproheme decarboxylase (250 aa).

Residues R131, 145–149, H172, and Q185 contribute to the Fe-coproporphyrin III site; that span reads YPMNK. Y145 is a catalytic residue.

This sequence belongs to the ChdC family. Type 1 subfamily. The cofactor is Fe-coproporphyrin III.

The enzyme catalyses Fe-coproporphyrin III + 2 H2O2 + 2 H(+) = heme b + 2 CO2 + 4 H2O. It catalyses the reaction Fe-coproporphyrin III + H2O2 + H(+) = harderoheme III + CO2 + 2 H2O. The catalysed reaction is harderoheme III + H2O2 + H(+) = heme b + CO2 + 2 H2O. It functions in the pathway porphyrin-containing compound metabolism; protoheme biosynthesis. Its function is as follows. Involved in coproporphyrin-dependent heme b biosynthesis. Catalyzes the decarboxylation of Fe-coproporphyrin III (coproheme) to heme b (protoheme IX), the last step of the pathway. The reaction occurs in a stepwise manner with a three-propionate intermediate. The protein is Coproheme decarboxylase of Staphylococcus aureus (strain MRSA252).